Here is a 2419-residue protein sequence, read N- to C-terminus: Telomere-associated protein RIF1 (2419 aa).

Disordered regions lie at residues 1–24 (MTAP…VPPG) and 373–408 (SIPS…SPRG). Polar residues predominate over residues 373–385 (SIPSPQGNSSRGS). Phosphoserine occurs at positions 385, 391, 779, 976, and 1005. Threonine 1044 carries the post-translational modification Phosphothreonine. Residues 1184–1198 (SSSTETSVVSSSSVS) are compositionally biased toward low complexity. 2 disordered regions span residues 1184 to 1594 (SSST…QAVP) and 1613 to 1637 (RVIL…EKSK). Polar residues-rich tracts occupy residues 1199-1217 (NATF…QTFI) and 1228-1255 (RPFS…TNTD). The residue at position 1215 (threonine 1215) is a Phosphothreonine. 2 positions are modified to phosphoserine: serine 1231 and serine 1233. Over residues 1263–1272 (REVTNSKSDS) the composition is skewed to basic and acidic residues. A compositionally biased stretch (polar residues) spans 1289-1302 (AEQSVTKKSKPSLT). The segment covering 1323–1345 (HVSENDDHPSEATLEHKDGDPKP) has biased composition (basic and acidic residues). A phosphoserine mark is found at serine 1407, serine 1439, serine 1457, and serine 1498. The segment covering 1416-1455 (SQERESGQQKKERRKEEEKIISKSPLRIKDDKLPTQKLTD) has biased composition (basic and acidic residues). Residues 1457–1467 (SPIQENLTEKG) show a composition bias toward polar residues. The residue at position 1504 (threonine 1504) is a Phosphothreonine. Basic and acidic residues predominate over residues 1507–1516 (NLDKSSEKPL). Polar residues predominate over residues 1525–1537 (RRASQGLISAVEN). A phosphoserine mark is found at serine 1528, serine 1538, serine 1540, serine 1542, and serine 1550. The segment covering 1551 to 1560 (RKKRSGKWKN) has biased composition (basic residues). Phosphoserine occurs at positions 1562 and 1565. The span at 1572–1581 (EEKKAEEEVM) shows a compositional bias: basic and acidic residues. Phosphoserine is present on residues serine 1680 and serine 1683. The residue at position 1780 (threonine 1780) is a Phosphothreonine. The residue at position 1784 (serine 1784) is a Phosphoserine. The segment at 1812–1836 (ASEAVSEIQGPCSENHSPAEDPGLS) is disordered. The residue at position 1842 (serine 1842) is a Phosphoserine. The interval 1882 to 2419 (DAFVAADSEK…RWRSPAHENS (538 aa)) is interaction with condensed chromosomes in telophase. Disordered stretches follow at residues 1890 to 1914 (EKST…ECEA) and 1929 to 1983 (FNSG…AQMS). 12 positions are modified to phosphoserine: serine 1931, serine 2094, serine 2109, serine 2121, serine 2125, serine 2144, serine 2153, serine 2208, serine 2287, serine 2341, serine 2413, and serine 2419. Residues 2119–2394 (VWSPLASPST…TGSQLFEMHE (276 aa)) form an interaction with ERCC6 region. Residues 2182 to 2212 (SPIIKSVKTSPTSHSKHNTTSAKGFLSPGSQ) form a disordered region. A compositionally biased stretch (polar residues) spans 2189–2212 (KTSPTSHSKHNTTSAKGFLSPGSQ).

This sequence belongs to the RIF1 family. In terms of assembly, interacts with TP53BP1 (when phosphorylated by ATM). May interact with TRF2. Interacts with SHLD2. Interacts with ERCC6 (via WHD region). Interacts with ASTE1. As to expression, expressed in Sertoli cells, prospermatagonia, early primary spermatocytes, and in oocytes at all stages of their growth. Expressed in embryonic stem (ES) and embryonic germ (EG) cells: expression is lost upon differentiation.

The protein localises to the nucleus. It localises to the chromosome. It is found in the telomere. The protein resides in the cytoplasm. Its subcellular location is the cytoskeleton. The protein localises to the spindle. Key regulator of TP53BP1 that plays a key role in the repair of double-strand DNA breaks (DSBs) in response to DNA damage: acts by promoting non-homologous end joining (NHEJ)-mediated repair of DSBs. In response to DNA damage, interacts with ATM-phosphorylated TP53BP1. Interaction with TP53BP1 leads to dissociate the interaction between NUDT16L1/TIRR and TP53BP1, thereby unmasking the tandem Tudor-like domain of TP53BP1 and allowing recruitment to DNA DSBs. Once recruited to DSBs, RIF1 and TP53BP1 act by promoting NHEJ-mediated repair of DSBs. In the same time, RIF1 and TP53BP1 specifically counteract the function of BRCA1 by blocking DSBs resection via homologous recombination (HR) during G1 phase. Also required for immunoglobulin class-switch recombination (CSR) during antibody genesis, a process that involves the generation of DNA DSBs. Promotes NHEJ of dysfunctional telomeres. In Mus musculus (Mouse), this protein is Telomere-associated protein RIF1.